A 257-amino-acid chain; its full sequence is UPF0246 protein BT_3869 (257 aa).

The protein belongs to the UPF0246 family.

In Bacteroides thetaiotaomicron (strain ATCC 29148 / DSM 2079 / JCM 5827 / CCUG 10774 / NCTC 10582 / VPI-5482 / E50), this protein is UPF0246 protein BT_3869.